The sequence spans 431 residues: Adenylosuccinate synthetase (431 aa).

Residues 13-19 (GDEGKGK) and 41-43 (GHT) each bind GTP. Asp-14 functions as the Proton acceptor in the catalytic mechanism. The Mg(2+) site is built by Asp-14 and Gly-41. Residues 14 to 17 (DEGK), 39 to 42 (NAGH), Thr-130, Arg-144, Gln-225, Thr-240, and Arg-304 contribute to the IMP site. Catalysis depends on His-42, which acts as the Proton donor. Residue 300-306 (AVTGRPR) participates in substrate binding. Residues Arg-306, 332–334 (KLD), and 415–417 (STG) contribute to the GTP site.

It belongs to the adenylosuccinate synthetase family. As to quaternary structure, homodimer. It depends on Mg(2+) as a cofactor.

It is found in the cytoplasm. It carries out the reaction IMP + L-aspartate + GTP = N(6)-(1,2-dicarboxyethyl)-AMP + GDP + phosphate + 2 H(+). Its pathway is purine metabolism; AMP biosynthesis via de novo pathway; AMP from IMP: step 1/2. In terms of biological role, plays an important role in the de novo pathway of purine nucleotide biosynthesis. Catalyzes the first committed step in the biosynthesis of AMP from IMP. In Legionella pneumophila (strain Lens), this protein is Adenylosuccinate synthetase.